A 60-amino-acid polypeptide reads, in one-letter code: Large ribosomal subunit protein bL32 (60 aa).

A compositionally biased stretch (basic residues) spans 1–16 (MAVPRRKTSPSRRGMR). Residues 1 to 60 (MAVPRRKTSPSRRGMRRSADAIKKPTYVEDKDSGELRRPHHLDLKTGMYKGRQVLKKKES) form a disordered region. The span at 17–44 (RSADAIKKPTYVEDKDSGELRRPHHLDL) shows a compositional bias: basic and acidic residues.

It belongs to the bacterial ribosomal protein bL32 family.

The chain is Large ribosomal subunit protein bL32 from Bradyrhizobium diazoefficiens (strain JCM 10833 / BCRC 13528 / IAM 13628 / NBRC 14792 / USDA 110).